The primary structure comprises 266 residues: Regulatory protein RecX (266 aa).

Belongs to the RecX family.

It localises to the cytoplasm. In terms of biological role, modulates RecA activity. The polypeptide is Regulatory protein RecX (Enterococcus faecalis (strain ATCC 700802 / V583)).